The chain runs to 157 residues: Neutrophil recruitment protein (157 aa).

Positions 1 to 19 (MCSIWLTFFLSFLILNTKA) are cleaved as a signal peptide.

This sequence belongs to the PBP/GOBP family. As to quaternary structure, interacts with mouse TLR1; the interaction promotes activation of canonical NF-kappa-B signaling in host macrophages. Interacts with human TLR1. Interacts with mouse TLR4; the interaction promotes activation of canonical NF-kappa-B signaling in host macrophages. Interacts with human TLR4. In terms of tissue distribution, female salivary gland (at protein level).

The protein resides in the secreted. Its function is as follows. Activates MyD88-dependent canonical NF-kappa-B signaling in host macrophages via interaction with host TLR1 and TLR4; this drives the expression of neutrophil chemoattractants, followed by the subsequent influx of neutrophils and recruitment of myeloid cells at the bite site. In terms of biological role, (Microbial infection) Promotes Zika virus infection in mouse model by facilitating recruitment of flavivirus-permissive myeloid cells at the bite site. (Microbial infection) Promotes dengue virus infection in mouse model by facilitating recruitment of flavivirus-permissive myeloid cells at the bite site. The protein is Neutrophil recruitment protein of Aedes aegypti (Yellowfever mosquito).